The sequence spans 294 residues: 33 kDa chaperonin (294 aa).

2 cysteine pairs are disulfide-bonded: cysteine 238/cysteine 240 and cysteine 271/cysteine 274.

It belongs to the HSP33 family. In terms of processing, under oxidizing conditions two disulfide bonds are formed involving the reactive cysteines. Under reducing conditions zinc is bound to the reactive cysteines and the protein is inactive.

It localises to the cytoplasm. Functionally, redox regulated molecular chaperone. Protects both thermally unfolding and oxidatively damaged proteins from irreversible aggregation. Plays an important role in the bacterial defense system toward oxidative stress. The polypeptide is 33 kDa chaperonin (Clostridium novyi (strain NT)).